Reading from the N-terminus, the 924-residue chain is Nodulation receptor kinase (924 aa).

Positions 1–29 (MMELRVICIIRLVVACVLCLCIFIRSASS) are cleaved as a signal peptide. Residues 361–382 (EVIQKMRKELLLQNQDNEALES) are a coiled coil. LRR repeat units follow at residues 406-428 (VITK…VTEM), 430-452 (KLQI…PPSS), 453-475 (LLIS…IISL), and 477-498 (HLNS…AKLN). Residues 520-540 (FMIGAITSGSILITLAVVILF) form a helical membrane-spanning segment. The region spanning 595-872 (EKYKTLIGEG…IVRELEDALI (278 aa)) is the Protein kinase domain. ATP is bound by residues 601–609 (IGEGGFGSV) and lysine 623. Catalysis depends on aspartate 721, which acts as the Proton acceptor.

This sequence belongs to the protein kinase superfamily. Ser/Thr protein kinase family. In terms of processing, may be phosphorylated.

Its subcellular location is the membrane. It catalyses the reaction L-seryl-[protein] + ATP = O-phospho-L-seryl-[protein] + ADP + H(+). The enzyme catalyses L-threonyl-[protein] + ATP = O-phospho-L-threonyl-[protein] + ADP + H(+). Functionally, involved in the perception of symbiotic fungi and bacteria and required for the calcium spiking. Part of the perception/transduction system leading to nodulation or mycorrhizal infection. The sequence is that of Nodulation receptor kinase (NORK) from Pisum sativum (Garden pea).